The primary structure comprises 313 residues: R2-like ligand binding oxidase (313 aa).

Mn(2+) contacts are provided by glutamate 68, glutamate 101, and histidine 104. The segment at residues 71-162 (VTQDIQPFMS…AAQVRASVTY (92 aa)) is a cross-link (3-(O4'-tyrosyl)-valine (Val-Tyr)). Position 101 (glutamate 101) interacts with Fe cation. Residues glutamate 167, glutamate 202, and histidine 205 each contribute to the Fe cation site.

The protein belongs to the ribonucleoside diphosphate reductase small chain family. R2-like ligand binding oxidase subfamily. Homodimer. It depends on Fe cation as a cofactor. The cofactor is Mn(2+).

Functionally, probable oxidase that might be involved in lipid metabolism. In Mycobacteroides abscessus (strain ATCC 19977 / DSM 44196 / CCUG 20993 / CIP 104536 / JCM 13569 / NCTC 13031 / TMC 1543 / L948) (Mycobacterium abscessus), this protein is R2-like ligand binding oxidase.